The following is a 184-amino-acid chain: UPF0398 protein BC_1561 (184 aa).

The protein belongs to the UPF0398 family.

The protein is UPF0398 protein BC_1561 of Bacillus cereus (strain ATCC 14579 / DSM 31 / CCUG 7414 / JCM 2152 / NBRC 15305 / NCIMB 9373 / NCTC 2599 / NRRL B-3711).